We begin with the raw amino-acid sequence, 408 residues long: Multidrug resistance protein MdtG (408 aa).

The next 10 membrane-spanning stretches (helical) occupy residues 16-36 (LIVAWLGCFLTGAAFSLVMPF), 58-78 (IVFSITFLFSAIASPFWGGLA), 92-112 (LGMGIVMVLMGLAQNIWQFLI), 115-135 (ALLGLLGGFVPNANALIATQV), 146-166 (TLSTGGVSGALLGPMAGGLLA), 173-193 (PVFFITASVLILCFFVTLFCI), 224-244 (LFVTTLIIQVATGSIAPILTL), 256-276 (VAFISGMIASVPGVAALLSAP), 290-310 (ILITALIFSVLLLIPMSYVQT), and 378-398 (AVFLVTAGVVLFNAVYSWNSL).

Belongs to the major facilitator superfamily. DHA1 family. MdtG (TC 2.A.1.2.20) subfamily.

It localises to the cell inner membrane. In terms of biological role, confers resistance to fosfomycin and deoxycholate. This is Multidrug resistance protein MdtG from Escherichia coli O17:K52:H18 (strain UMN026 / ExPEC).